Reading from the N-terminus, the 378-residue chain is Septin-5 (378 aa).

One can recognise a Septin-type G domain in the interval 50–323 (KGFDFTLMVA…ENYRAHCIQQ (274 aa)). Positions 60–67 (GESGLGKS) are G1 motif. Residues 60–67 (GESGLGKS), T94, and G120 contribute to the GTP site. The interval 117-120 (DTPG) is G3 motif. Residue R177 is modified to Omega-N-methylarginine. The tract at residues 198–201 (AKAD) is G4 motif. Position 199–207 (199–207 (KADCLVPSE)) interacts with GTP. S234 bears the Phosphoserine mark. GTP-binding residues include G257 and R272. S336 carries the phosphoserine modification. The residue at position 345 (T345) is a Phosphothreonine. The stretch at 347-378 (DAETEKLIRMKDEELRRMQEMLQRMKQQMQDQ) forms a coiled coil.

Belongs to the TRAFAC class TrmE-Era-EngA-EngB-Septin-like GTPase superfamily. Septin GTPase family. As to quaternary structure, septins polymerize into heterooligomeric protein complexes that form filaments, and can associate with cellular membranes, actin filaments and microtubules. GTPase activity is required for filament formation. Interacts with SEPTIN2 and SEPTIN5. In platelets, associated with a complex containing STX4. Interacts with PRKN; this interaction leads to SEPTIN5 ubiquitination and degradation. Interacts with DYRK1A. Interacts with STX1A; in the cerebellar cortex. In terms of processing, phosphorylated by DYRK1A.

It is found in the cytoplasm. Its subcellular location is the cytoskeleton. Its function is as follows. Filament-forming cytoskeletal GTPase. May play a role in cytokinesis (Potential). May play a role in platelet secretion. The chain is Septin-5 from Macaca fascicularis (Crab-eating macaque).